We begin with the raw amino-acid sequence, 314 residues long: MAFVTRQFMRSVSSSSTASASAKKIIVKHVTVIGGGLMGAGIAQVAAATGHTVVLVDQTEDILAKSKKGIEESLRKVAKKKFAENLKAGDEFVEKTLSTIATSTDAASVVHSTDLVVEAIVENLKVKNELFKRLDKFAAEHTIFASNTSSLQITSIANATTRQDRFAGLHFFNPVPVMKLVEVIKTPMTSQKTFESLVDFSKALGKHPVSCKDTPGFIVNRLLVPYLMEAIRLYERGDASKEDIDTAMKLGAGYPMGPFELLDYVGLDTTKFIVDGWHEMDAENPLHQPSPSLNKLVAENKFGKKTGEGFYKYK.

Residues 1 to 12 constitute a mitochondrion transit peptide; sequence MAFVTRQFMRSV. Residues 34–39 and aspartate 57 each bind NAD(+); that span reads GGGLMG. The CoA site is built by serine 73 and lysine 80. Lysine 80 carries the N6-succinyllysine modification. Lysine 81 and lysine 87 each carry N6-acetyllysine; alternate. 2 positions are modified to N6-succinyllysine; alternate: lysine 81 and lysine 87. An NAD(+)-binding site is contributed by glutamate 122. Position 125 is an N6-acetyllysine (lysine 125). Lysine 127 lines the NAD(+) pocket. Lysine 127 is modified (N6-(2-hydroxyisobutyryl)lysine). Lysine 136 carries the post-translational modification N6-acetyllysine; alternate. Residue lysine 136 is modified to N6-succinyllysine; alternate. Residues serine 149 and asparagine 173 each coordinate NAD(+). Serine 149 contacts CoA. N6-acetyllysine is present on lysine 179. N6-acetyllysine; alternate occurs at positions 185, 192, and 202. N6-succinyllysine; alternate occurs at positions 185, 192, and 202. Lysine 206 carries the post-translational modification N6-succinyllysine. Lysine 212 and lysine 241 each carry N6-acetyllysine; alternate. An N6-succinyllysine; alternate mark is found at lysine 212 and lysine 241. Position 305 (lysine 305) interacts with NAD(+). At lysine 312 the chain carries N6-acetyllysine; alternate. Lysine 312 is subject to N6-succinyllysine; alternate.

This sequence belongs to the 3-hydroxyacyl-CoA dehydrogenase family. As to quaternary structure, homodimer. Interacts with GLUD1; this interaction inhibits the activation of glutamate dehydrogenase 1 (GLUD1). Post-translationally, succinylation at Lys-81, adjacent to a coenzyme A binding site. Desuccinylated by SIRT5. As to expression, expressed in liver, kidney, pancreas, heart and skeletal muscle.

It localises to the mitochondrion matrix. It carries out the reaction a (3S)-3-hydroxyacyl-CoA + NAD(+) = a 3-oxoacyl-CoA + NADH + H(+). The enzyme catalyses (3S)-3-hydroxybutanoyl-CoA + NAD(+) = acetoacetyl-CoA + NADH + H(+). It catalyses the reaction (3S)-hydroxydecanoyl-CoA + NAD(+) = 3-oxodecanoyl-CoA + NADH + H(+). The catalysed reaction is (3S)-hydroxyhexadecanoyl-CoA + NAD(+) = 3-oxohexadecanoyl-CoA + NADH + H(+). It functions in the pathway lipid metabolism; fatty acid beta-oxidation. Functionally, mitochondrial fatty acid beta-oxidation enzyme that catalyzes the third step of the beta-oxidation cycle for medium and short-chain 3-hydroxy fatty acyl-CoAs (C4 to C10). Plays a role in the control of insulin secretion by inhibiting the activation of glutamate dehydrogenase 1 (GLUD1), an enzyme that has an important role in regulating amino acid-induced insulin secretion. Plays a role in the maintenance of normal spermatogenesis through the reduction of fatty acid accumulation in the testes. This chain is Hydroxyacyl-coenzyme A dehydrogenase, mitochondrial (HADH), found in Homo sapiens (Human).